A 95-amino-acid chain; its full sequence is Large ribosomal subunit protein bL25 (95 aa).

This sequence belongs to the bacterial ribosomal protein bL25 family. In terms of assembly, part of the 50S ribosomal subunit; part of the 5S rRNA/L5/L18/L25 subcomplex. Contacts the 5S rRNA. Binds to the 5S rRNA independently of L5 and L18.

Functionally, this is one of the proteins that binds to the 5S RNA in the ribosome where it forms part of the central protuberance. In Haemophilus influenzae (strain 86-028NP), this protein is Large ribosomal subunit protein bL25.